The following is a 149-amino-acid chain: Calmodulin-like protein 3 (149 aa).

4 consecutive EF-hand domains span residues 8 to 43 (EQIA…LGQN), 44 to 79 (PTEA…KMKD), 81 to 116 (DSEE…LGEK), and 117 to 149 (LSDE…LVSK). Positions 21, 23, 25, 27, 32, 57, 59, 61, 63, 68, 94, 96, 98, 105, 130, 132, 134, 136, and 141 each coordinate Ca(2+).

It belongs to the calmodulin family. In terms of assembly, interacts with MYO10, the interaction is calcium-dependent and essential for MYO10 function in filopodial extension.

May function as a specific light chain of unconventional myosin-10 (MYO10), also enhances MYO10 translation, possibly by acting as a chaperone for the emerging MYO10 heavy chain protein. May compete with calmodulin by binding, with different affinities, to cellular substrates. The protein is Calmodulin-like protein 3 (Calml3) of Mus musculus (Mouse).